Here is a 187-residue protein sequence, read N- to C-terminus: Choriogonadotropin subunit beta variant 1 (187 aa).

The signal sequence occupies residues 1-50; sequence MSTFPVLAEDIPLRERHVKGRVDPHFRAPKMEMFQRLLLLLLLSMGGTWA. Cystine bridges form between cysteine 59/cysteine 107, cysteine 73/cysteine 122, cysteine 76/cysteine 160, cysteine 84/cysteine 138, cysteine 88/cysteine 140, and cysteine 143/cysteine 150. N-linked (GlcNAc...) asparagine glycans are attached at residues asparagine 63 and asparagine 80. The disordered stretch occupies residues 161 to 187; it reads DDPRFQDSSSSKAPPPSLPSPSRLPGP. Positions 173–187 are enriched in pro residues; sequence APPPSLPSPSRLPGP.

The protein belongs to the glycoprotein hormones subunit beta family. In terms of tissue distribution, expressed in placenta, testis and pituitary.

The protein localises to the secreted. The protein is Choriogonadotropin subunit beta variant 1 (CGB1) of Homo sapiens (Human).